Reading from the N-terminus, the 190-residue chain is Large ribosomal subunit protein uL5 (190 aa).

It belongs to the universal ribosomal protein uL5 family. As to quaternary structure, part of the 50S ribosomal subunit; contacts the 5S rRNA and probably tRNA. Forms a bridge to the 30S subunit in the 70S ribosome.

Its function is as follows. This is one of the proteins that bind and probably mediate the attachment of the 5S RNA into the large ribosomal subunit, where it forms part of the central protuberance. In the 70S ribosome it contacts protein S13 of the 30S subunit (bridge B1b), connecting the 2 subunits; this bridge is implicated in subunit movement. May contact the P site tRNA; the 5S rRNA and some of its associated proteins might help stabilize positioning of ribosome-bound tRNAs. In Methanocaldococcus jannaschii (strain ATCC 43067 / DSM 2661 / JAL-1 / JCM 10045 / NBRC 100440) (Methanococcus jannaschii), this protein is Large ribosomal subunit protein uL5.